Here is a 440-residue protein sequence, read N- to C-terminus: Thymidine phosphorylase (440 aa).

It belongs to the thymidine/pyrimidine-nucleoside phosphorylase family. As to quaternary structure, homodimer.

The enzyme catalyses thymidine + phosphate = 2-deoxy-alpha-D-ribose 1-phosphate + thymine. It participates in pyrimidine metabolism; dTMP biosynthesis via salvage pathway; dTMP from thymine: step 1/2. Functionally, the enzymes which catalyze the reversible phosphorolysis of pyrimidine nucleosides are involved in the degradation of these compounds and in their utilization as carbon and energy sources, or in the rescue of pyrimidine bases for nucleotide synthesis. The sequence is that of Thymidine phosphorylase from Burkholderia pseudomallei (strain K96243).